The primary structure comprises 57 residues: MFGDPKPYNPSSNDWKEEYEACKYWDRPPRGNLRDTPYYPWAPKENQYRVNFKLGFQ.

This is an uncharacterized protein from Homo sapiens (Human).